The chain runs to 841 residues: Envelope glycoprotein H (841 aa).

Residues 1–17 form the signal peptide; sequence MFALVLAVVILPLWTTA. 3 N-linked (GlcNAc...) asparagine; by host glycosylation sites follow: N18, N45, and N217. At 18 to 802 the chain is on the virion surface side; it reads NKSYVTPTPA…ERRQAIRMSG (785 aa). The segment at 246 to 309 is interaction with gL; that stretch reads DSGRVEVNIG…DPGPSYRVYL (64 aa). Residues N317, N499, N522, N760, and N783 are each glycosylated (N-linked (GlcNAc...) asparagine; by host). The chain crosses the membrane as a helical span at residues 803-823; sequence QYLGASLGGAFLAVVGFGIIG. The Intravirion segment spans residues 824–841; sequence WMLCGNSRLREYNKIPLT.

This sequence belongs to the herpesviridae glycoprotein H family. Interacts with glycoprotein L (gL); this interaction is necessary for the correct processing and cell surface expression of gH. The heterodimer gH/gL seems to interact with gB trimers during fusion. In terms of processing, N-glycosylated, O-glycosylated, and sialylated.

The protein resides in the virion membrane. Its subcellular location is the host cell membrane. It localises to the host endosome membrane. Its function is as follows. The heterodimer glycoprotein H-glycoprotein L is required for the fusion of viral and plasma membranes leading to virus entry into the host cell. Following initial binding to host receptor, membrane fusion is mediated by the fusion machinery composed of gB and the heterodimer gH/gL. May also be involved in the fusion between the virion envelope and the outer nuclear membrane during virion morphogenesis. The sequence is that of Envelope glycoprotein H from Varicella-zoster virus (strain Dumas) (HHV-3).